Here is a 295-residue protein sequence, read N- to C-terminus: MTSTDPSQASADRYVVIGNPVAHSRSPSIHAAFARQTGEAVHYDRLEAPLDGFADTVRRFFADGGYGCNVTVPFKLEAYDLADRLTERAEAAGAVNTLWIEEGLIHGDNTDGIGLVRDIQDNLDTLIEGKRVLLLGAGGAAMGAMLPLIECRPSRIVVANRTASRASDMLEAFVEAADQYGVELWGGGLDALEGLSEDEAVDVVINASSSSLQGEVPPVPEFLLGEGVLAYDMMYGAEPTVFLQFAARCGARVSDGLGMLVEQAAEAFYIWRGVRPRTAPVLAELRAALQAERKV.

Residues 24–26 (SRS) and Thr71 each bind shikimate. The active-site Proton acceptor is Lys75. Residue Glu87 coordinates NADP(+). Residues Asn96 and Asp111 each contribute to the shikimate site. NADP(+) contacts are provided by residues 136 to 140 (GAGGA), 160 to 165 (NRTASR), and Met233. Position 235 (Tyr235) interacts with shikimate. Residue Gly256 participates in NADP(+) binding.

It belongs to the shikimate dehydrogenase family. In terms of assembly, homodimer.

It carries out the reaction shikimate + NADP(+) = 3-dehydroshikimate + NADPH + H(+). It participates in metabolic intermediate biosynthesis; chorismate biosynthesis; chorismate from D-erythrose 4-phosphate and phosphoenolpyruvate: step 4/7. In terms of biological role, involved in the biosynthesis of the chorismate, which leads to the biosynthesis of aromatic amino acids. Catalyzes the reversible NADPH linked reduction of 3-dehydroshikimate (DHSA) to yield shikimate (SA). The polypeptide is Shikimate dehydrogenase (NADP(+)) (Cupriavidus taiwanensis (strain DSM 17343 / BCRC 17206 / CCUG 44338 / CIP 107171 / LMG 19424 / R1) (Ralstonia taiwanensis (strain LMG 19424))).